The sequence spans 269 residues: MLKKKNQFDYLNLSHVLSKKKNSGGGWINKISDKLSEINVAEYQVVSKHSNYLFYSRFGLLDTFVYFLFFLCFFLNNVLFLAGVFHTKQFTFNEVNGFNQFYLFWTVEKPTDIIQASITYQISQYGIANLVFGLISLALLVFLSFRWTVSLFFKSQTTKWERIGYTTGFFISIVVYLLWILLMVLFLVLLDQQFFERDTQKIQSATRFSLFFNVENNNGVYLSKLNSFGVFATAWAISLVFYSFFFIAIFAFNYNKTKLKQLFKKSKAK.

4 consecutive transmembrane segments (helical) span residues 64 to 84, 125 to 145, 169 to 189, and 230 to 250; these read FVYFLFFLCFFLNNVLFLAGV, YGIANLVFGLISLALLVFLSF, FFISIVVYLLWILLMVLFLVL, and VFATAWAISLVFYSFFFIAIF.

It is found in the cell membrane. This is an uncharacterized protein from Mycoplasma genitalium (strain ATCC 33530 / DSM 19775 / NCTC 10195 / G37) (Mycoplasmoides genitalium).